A 998-amino-acid polypeptide reads, in one-letter code: Protein Smaug (998 aa).

The span at 1–37 (MKYATGTDNAMTSGISGQTNNSNSASNEMQPTTSTPT) shows a compositional bias: polar residues. 3 disordered regions span residues 1-45 (MKYA…EATS), 50-69 (TATY…QSQP), and 329-370 (LCPA…GSSS). The span at 329–338 (LCPASGSRSS) shows a compositional bias: low complexity. Phosphoserine occurs at positions 564 and 575. Positions 583–763 (EFKPNYIKFH…KDLKFKLSKM (181 aa)) are interaction with cup. The region spanning 600–654 (GIGLWLKSLRLHKYIELFKNMTYEEMLLITEDFLQSVGVTKGASHKLALCIDKLK) is the SAM domain. Disordered stretches follow at residues 773-892 (HVKP…MQQM) and 942-977 (NNGS…QQPK). Polar residues-rich tracts occupy residues 801-822 (KSGS…NFSL) and 854-864 (HQPQYKSSSYP). Residue serine 971 is modified to Phosphoserine.

The protein belongs to the SMAUG family. Interacts with oskar (osk). Binds to the 3'-UTR of nos. Interacts with cup, which in turn recruits eIF4-E, leading to an indirect interaction between smg and eIF4-E that prevents mRNA translation.

The protein localises to the cytoplasm. Its function is as follows. Translation regulator that binds to the 3'-UTR of specific mRNAs such as nanos (nos) and prevent their translation. Prevents translation of unlocalized nos in the bulk cytoplasm via the recruitment of cup. This chain is Protein Smaug, found in Drosophila simulans (Fruit fly).